A 337-amino-acid polypeptide reads, in one-letter code: MVLVMDDEESNNVERYDDVVLPGFRFHPTDEELVSFYLKRKVLHKSLPFDLIKKVDIYKYDPWDLPKLAAMGEKEWYFYCPRDRKYRNSTRPNRVTGGGFWKATGTDRPIYSLDSTRCIGLKKSLVFYRGRAAKGVKTDWMMHEFRLPSLSDSHHSSYPNYNNKKQHLNNNNNSKELPSNDAWAICRIFKKTNAVSSQRSIPQSWVYPTIPDNNQQSHNNTATLLASSDVLSHISTRQNFIPSPVNEPASFTESAASYFASQMLGVTYNTARNNGTGDALFLRNNGTGDALVLSNNENNYFNNLTGGLTHEVPNVRSMVMEETTGSEMSATSYSTNN.

In terms of domain architecture, NAC spans 20-191; the sequence is VLPGFRFHPT…AWAICRIFKK (172 aa).

Its subcellular location is the nucleus. This Arabidopsis thaliana (Mouse-ear cress) protein is Putative NAC domain-containing protein 94 (ANAC094).